The sequence spans 293 residues: Putative ABC transporter ATP-binding protein AF_0731 (293 aa).

Positions 2 to 236 constitute an ABC transporter domain; sequence IEAVDLHFCY…RKLGIRSFSL (235 aa). 34–41 lines the ATP pocket; it reads GRNGAGKT.

This sequence belongs to the ABC transporter superfamily.

Its subcellular location is the cell membrane. Its function is as follows. Probably part of an ABC transporter complex. Responsible for energy coupling to the transport system. The chain is Putative ABC transporter ATP-binding protein AF_0731 from Archaeoglobus fulgidus (strain ATCC 49558 / DSM 4304 / JCM 9628 / NBRC 100126 / VC-16).